A 550-amino-acid chain; its full sequence is Complement control protein (550 aa).

A signal peptide spans 1-19; sequence MAFLRQTLWILWTFTMVIG. Sushi domains lie at 23–83, 84–150, 151–209, and 210–268; these read EKCS…TCNK, KSCP…FCEK, EKCH…TCEL, and AGCK…KCVL. 8 disulfide bridges follow: Cys-25/Cys-68, Cys-53/Cys-81, Cys-86/Cys-131, Cys-116/Cys-148, Cys-153/Cys-194, Cys-180/Cys-207, Cys-212/Cys-254, and Cys-240/Cys-266. Asn-63 and Asn-111 each carry an N-linked (GlcNAc...) asparagine; by host glycan. An N-linked (GlcNAc...) asparagine; by host glycan is attached at Asn-197. N-linked (GlcNAc...) asparagine; by host glycosylation is found at Asn-255, Asn-275, and Asn-299. The disordered stretch occupies residues 269–338; sequence EDIDDPNNSN…TSEGFNETTT (70 aa). Polar residues-rich tracts occupy residues 288–302 and 312–321; these read EKPNGNVFQRSNYTE and TAATCDTNCE. N-linked (GlcNAc...) asparagine; by host glycans are attached at residues Asn-334, Asn-371, Asn-374, and Asn-378. 2 disordered regions span residues 387-408 and 420-516; these read TPTSQDDATPSIPSVQTPNYNT and IEEG…RPPA. The segment covering 424 to 440 has biased composition (polar residues); the sequence is PSNSTTSEKATASTLSH. Residues Asn-426, Asn-445, Asn-455, and Asn-483 are each glycosylated (N-linked (GlcNAc...) asparagine; by host). The segment covering 450–476 has biased composition (polar residues); sequence IYTTLNKTTQLPSTNKPTNSQAKSSTK. Polar residues predominate over residues 484–495; that stretch reads KTTSNPAISLTD. The chain crosses the membrane as a helical span at residues 528–548; it reads IGLLTAVALTCGLITLFHYLF.

Its subcellular location is the host membrane. It is found in the virion membrane. In terms of biological role, inhibits the complement component of the host innate immune response. Regulates host C3 convertases, accelerating their decay, and acts as a cofactor for factor I degradation of C4b and C3b. Also binds heparin, and therefore may play two distinct roles when incorporated in virion membranes: immune evasion and host cell binding. The polypeptide is Complement control protein (ORF4) (Human herpesvirus 8 type P (isolate GK18) (HHV-8)).